Consider the following 312-residue polypeptide: Malate dehydrogenase (312 aa).

NAD(+)-binding positions include 12–17 (GAGFTG) and aspartate 36. Substrate-binding residues include arginine 87 and arginine 93. Residues asparagine 100 and 123–125 (LTN) contribute to the NAD(+) site. Asparagine 125 contributes to the substrate binding site. The residue at position 149 (serine 149) is a Phosphoserine. A substrate-binding site is contributed by arginine 156. Residue histidine 180 is the Proton acceptor of the active site.

This sequence belongs to the LDH/MDH superfamily. MDH type 3 family. Homotetramer.

The catalysed reaction is (S)-malate + NAD(+) = oxaloacetate + NADH + H(+). Catalyzes the reversible oxidation of malate to oxaloacetate. In Bacillus israeli, this protein is Malate dehydrogenase.